The following is a 388-amino-acid chain: UDP-galactose transporter senju (388 aa).

The next 10 membrane-spanning stretches (helical) occupy residues 13–33 (LTFV…IFVT), 46–66 (TVTV…CLYC), 84–104 (VLGL…LAFV), 113–133 (TYYL…QIIF), 142–162 (WISL…FGSF), 202–222 (FSLS…AGVY), 236–256 (IFVQ…VILL), 276–296 (FSVL…SFFL), 309–329 (ALEL…PIYM), and 331–351 (TALA…SPVV).

It belongs to the nucleotide-sugar transporter family.

Its subcellular location is the golgi apparatus membrane. Its function is as follows. UDP-galactose transporter involved in the synthesis of galactose-containing glycans. Plays a role in quiescence of the innate immune response, possibly by regulating glycosylation of the Toll pathway ligand spz. In Drosophila melanogaster (Fruit fly), this protein is UDP-galactose transporter senju.